The primary structure comprises 464 residues: NADH-ubiquinone oxidoreductase chain 4 (464 aa).

The next 13 membrane-spanning stretches (helical) occupy residues 18 to 38 (LLPT…VLPT), 54 to 74 (IADI…IANW), 79 to 99 (SLLY…NFMC), 102 to 122 (MLSF…LIGL), 131 to 151 (AADY…LAIG), 168 to 188 (VVLS…GIMV), 207 to 227 (PLAG…YAII), 239 to 259 (VLYT…TSII), 266 to 286 (LKVI…LGIL), 297 to 317 (LILS…VGGI), 332 to 352 (GLLT…FSNI), 375 to 395 (TILG…MLKV), and 420 to 440 (LLMI…NGII).

Belongs to the complex I subunit 4 family.

It is found in the mitochondrion membrane. It carries out the reaction a ubiquinone + NADH + 5 H(+)(in) = a ubiquinol + NAD(+) + 4 H(+)(out). Core subunit of the mitochondrial membrane respiratory chain NADH dehydrogenase (Complex I) that is believed to belong to the minimal assembly required for catalysis. Complex I functions in the transfer of electrons from NADH to the respiratory chain. The immediate electron acceptor for the enzyme is believed to be ubiquinone. The polypeptide is NADH-ubiquinone oxidoreductase chain 4 (NAD4) (Candida albicans (strain SC5314 / ATCC MYA-2876) (Yeast)).